A 101-amino-acid polypeptide reads, in one-letter code: Putative pterin-4-alpha-carbinolamine dehydratase (101 aa).

The protein belongs to the pterin-4-alpha-carbinolamine dehydratase family.

It catalyses the reaction (4aS,6R)-4a-hydroxy-L-erythro-5,6,7,8-tetrahydrobiopterin = (6R)-L-erythro-6,7-dihydrobiopterin + H2O. The sequence is that of Putative pterin-4-alpha-carbinolamine dehydratase from Streptomyces coelicolor (strain ATCC BAA-471 / A3(2) / M145).